The following is a 962-amino-acid chain: Protein kinase ORF73 (962 aa).

2 disordered regions span residues 1 to 28 (MADR…NDRP) and 62 to 152 (STPA…RATT). Residues 81-90 (DSDDDDEEDN) show a composition bias toward acidic residues. The segment covering 143 to 152 (YDTTGRRATT) has biased composition (polar residues). The region spanning 301-595 (LRAAPVLGKG…ASDLLKSPRY (295 aa)) is the Protein kinase domain. Residues 307–315 (LGKGYFGTV) and Lys324 contribute to the ATP site. Asp434 acts as the Proton acceptor in catalysis.

The protein belongs to the protein kinase superfamily. Ser/Thr protein kinase family.

It catalyses the reaction L-seryl-[protein] + ATP = O-phospho-L-seryl-[protein] + ADP + H(+). The catalysed reaction is L-threonyl-[protein] + ATP = O-phospho-L-threonyl-[protein] + ADP + H(+). The chain is Protein kinase ORF73 (ORF73) from Ictaluridae (bullhead catfishes).